Reading from the N-terminus, the 327-residue chain is Interleukin-12 subunit beta (327 aa).

The N-terminal stretch at 1 to 22 is a signal peptide; it reads MCLQQLVISWVSLVWLASPLLA. In terms of domain architecture, Ig-like C2-type spans 23–106; that stretch reads IWELEKNVYV…LSQMLLLLHK (84 aa). Cysteines 50 and 90 form a disulfide. 2 N-linked (GlcNAc...) asparagine glycosylation sites follow: Asn134 and Asn152. The 91-residue stretch at 237–327 folds into the Fibronectin type-III domain; sequence PPKNLKMKPS…WSEWATMSCP (91 aa).

The protein belongs to the IL-12B family. In terms of assembly, heterodimer with IL12A; disulfide-linked. The heterodimer is known as interleukin IL-12. Heterodimer with IL23A; disulfide-linked. The heterodimer is known as interleukin IL-23. Also secreted as a monomer. Interacts with NBR1; this interaction promotes IL-12 secretion.

Its subcellular location is the secreted. Functionally, cytokine that can act as a growth factor for activated T and NK cells, enhance the lytic activity of NK/lymphokine-activated killer cells, and stimulate the production of IFN-gamma by resting PBMC. Its function is as follows. Associates with IL23A to form the IL-23 interleukin, a heterodimeric cytokine which functions in innate and adaptive immunity. IL-23 may constitute with IL-17 an acute response to infection in peripheral tissues. IL-23 binds to a heterodimeric receptor complex composed of IL12RB1 and IL23R, activates the Jak-Stat signaling cascade, stimulates memory rather than naive T-cells and promotes production of pro-inflammatory cytokines. IL-23 induces autoimmune inflammation and thus may be responsible for autoimmune inflammatory diseases and may be important for tumorigenesis. The chain is Interleukin-12 subunit beta (IL12B) from Marmota monax (Woodchuck).